The primary structure comprises 107 residues: Anaphase-promoting complex subunit 14 (107 aa).

The APC/C is composed of at least 13 subunits: apc1, apc2, nuc2, apc4, apc5, cut9, apc8, apc10, apc11, hcn1, apc13, apc14 and apc15.

It localises to the ascus epiplasm. Component of the anaphase promoting complex/cyclosome (APC/C), a cell cycle-regulated E3 ubiquitin-protein ligase complex that controls progression through mitosis and the G1 phase of the cell cycle. The APC/C is thought to confer substrate specificity and, in the presence of ubiquitin-conjugating E2 enzymes, it catalyzes the formation of protein-ubiquitin conjugates that are subsequently degraded by the 26S proteasome. Appears to play a role in spore wall formation. The chain is Anaphase-promoting complex subunit 14 from Schizosaccharomyces pombe (strain 972 / ATCC 24843) (Fission yeast).